The chain runs to 363 residues: 24-methylenesterol C-methyltransferase 2 (363 aa).

Residues 6-26 form a helical membrane-spanning segment; sequence MAWTAAGVGMALVYWFVWVMG.

Belongs to the class I-like SAM-binding methyltransferase superfamily. Erg6/SMT family.

The protein localises to the membrane. The catalysed reaction is 24-methylidenelophenol + S-adenosyl-L-methionine = (Z)-24-ethylidenelophenol + S-adenosyl-L-homocysteine + H(+). It participates in steroid biosynthesis; sterol biosynthesis. Its function is as follows. Catalyzes the methyl transfer from S-adenosyl-methionine to the methylene group of 24-methylene lophenol to form 24-ethylidene lophenol. This chain is 24-methylenesterol C-methyltransferase 2 (Smt2-1), found in Oryza sativa subsp. japonica (Rice).